The primary structure comprises 425 residues: Dihydroorotase (425 aa).

Zn(2+) contacts are provided by histidine 61 and histidine 63. Residues histidine 63–arginine 65 and asparagine 95 contribute to the substrate site. 4 residues coordinate Zn(2+): lysine 146, histidine 175, histidine 224, and aspartate 293. Lysine 146 carries the post-translational modification N6-carboxylysine. Aspartate 293 is a catalytic residue. Residues histidine 297 and proline 311–glycine 312 contribute to the substrate site.

It belongs to the metallo-dependent hydrolases superfamily. DHOase family. Class I DHOase subfamily. It depends on Zn(2+) as a cofactor.

The catalysed reaction is (S)-dihydroorotate + H2O = N-carbamoyl-L-aspartate + H(+). The protein operates within pyrimidine metabolism; UMP biosynthesis via de novo pathway; (S)-dihydroorotate from bicarbonate: step 3/3. Its function is as follows. Catalyzes the reversible cyclization of carbamoyl aspartate to dihydroorotate. In Aeropyrum pernix (strain ATCC 700893 / DSM 11879 / JCM 9820 / NBRC 100138 / K1), this protein is Dihydroorotase.